We begin with the raw amino-acid sequence, 466 residues long: Ribulose bisphosphate carboxylase large chain (466 aa).

Residue K5 is modified to N6,N6,N6-trimethyllysine. Substrate is bound by residues N114 and T164. K166 (proton acceptor) is an active-site residue. K168 lines the substrate pocket. Residues K192, D194, and E195 each coordinate Mg(2+). K192 carries the post-translational modification N6-carboxylysine. The active-site Proton acceptor is the H285. R286, H318, and S370 together coordinate substrate.

Belongs to the RuBisCO large chain family. Type I subfamily. As to quaternary structure, heterohexadecamer of 8 large chains and 8 small chains; disulfide-linked. The disulfide link is formed within the large subunit homodimers. The cofactor is Mg(2+). In terms of processing, the disulfide bond which can form in the large chain dimeric partners within the hexadecamer appears to be associated with oxidative stress and protein turnover.

It localises to the plastid. The protein localises to the chloroplast. It catalyses the reaction 2 (2R)-3-phosphoglycerate + 2 H(+) = D-ribulose 1,5-bisphosphate + CO2 + H2O. The enzyme catalyses D-ribulose 1,5-bisphosphate + O2 = 2-phosphoglycolate + (2R)-3-phosphoglycerate + 2 H(+). In terms of biological role, ruBisCO catalyzes two reactions: the carboxylation of D-ribulose 1,5-bisphosphate, the primary event in carbon dioxide fixation, as well as the oxidative fragmentation of the pentose substrate in the photorespiration process. Both reactions occur simultaneously and in competition at the same active site. In Adenium obesum (Desert rose), this protein is Ribulose bisphosphate carboxylase large chain.